The sequence spans 473 residues: Glutamate--tRNA ligase (473 aa).

The 'HIGH' region motif lies at 9-19 (PSPTGYLHVGG). Cysteine 98, cysteine 100, cysteine 125, and aspartate 127 together coordinate Zn(2+). Positions 237–241 (KLSKR) match the 'KMSKS' region motif. Lysine 240 lines the ATP pocket.

Belongs to the class-I aminoacyl-tRNA synthetase family. Glutamate--tRNA ligase type 1 subfamily. Monomer. Zn(2+) serves as cofactor.

It is found in the cytoplasm. The enzyme catalyses tRNA(Glu) + L-glutamate + ATP = L-glutamyl-tRNA(Glu) + AMP + diphosphate. In terms of biological role, catalyzes the attachment of glutamate to tRNA(Glu) in a two-step reaction: glutamate is first activated by ATP to form Glu-AMP and then transferred to the acceptor end of tRNA(Glu). The sequence is that of Glutamate--tRNA ligase from Sodalis glossinidius (strain morsitans).